Consider the following 162-residue polypeptide: 2-C-methyl-D-erythritol 2,4-cyclodiphosphate synthase (162 aa).

A divalent metal cation-binding residues include Asp10 and His12. 4-CDP-2-C-methyl-D-erythritol 2-phosphate-binding positions include Asp10 to His12 and His36 to Ser37. Residue His44 coordinates a divalent metal cation. Residues Asp58–Gly60, Phe63–Asp67, Ala102–Ala108, Thr134–Glu137, Phe141, and Arg144 contribute to the 4-CDP-2-C-methyl-D-erythritol 2-phosphate site.

This sequence belongs to the IspF family. Homotrimer. It depends on a divalent metal cation as a cofactor.

The catalysed reaction is 4-CDP-2-C-methyl-D-erythritol 2-phosphate = 2-C-methyl-D-erythritol 2,4-cyclic diphosphate + CMP. Its pathway is isoprenoid biosynthesis; isopentenyl diphosphate biosynthesis via DXP pathway; isopentenyl diphosphate from 1-deoxy-D-xylulose 5-phosphate: step 4/6. Functionally, involved in the biosynthesis of isopentenyl diphosphate (IPP) and dimethylallyl diphosphate (DMAPP), two major building blocks of isoprenoid compounds. Catalyzes the conversion of 4-diphosphocytidyl-2-C-methyl-D-erythritol 2-phosphate (CDP-ME2P) to 2-C-methyl-D-erythritol 2,4-cyclodiphosphate (ME-CPP) with a corresponding release of cytidine 5-monophosphate (CMP). This is 2-C-methyl-D-erythritol 2,4-cyclodiphosphate synthase from Pseudoalteromonas atlantica (strain T6c / ATCC BAA-1087).